A 163-amino-acid chain; its full sequence is NADH-quinone oxidoreductase subunit I (163 aa).

4Fe-4S ferredoxin-type domains lie at 54-84 (LRRY…IDSA) and 94-123 (TRYD…ETHI). Residues Cys64, Cys67, Cys70, Cys74, Cys103, Cys106, Cys109, and Cys113 each contribute to the [4Fe-4S] cluster site.

It belongs to the complex I 23 kDa subunit family. As to quaternary structure, NDH-1 is composed of 14 different subunits. Subunits NuoA, H, J, K, L, M, N constitute the membrane sector of the complex. [4Fe-4S] cluster serves as cofactor.

It localises to the cell inner membrane. It catalyses the reaction a quinone + NADH + 5 H(+)(in) = a quinol + NAD(+) + 4 H(+)(out). NDH-1 shuttles electrons from NADH, via FMN and iron-sulfur (Fe-S) centers, to quinones in the respiratory chain. The immediate electron acceptor for the enzyme in this species is believed to be ubiquinone. Couples the redox reaction to proton translocation (for every two electrons transferred, four hydrogen ions are translocated across the cytoplasmic membrane), and thus conserves the redox energy in a proton gradient. The polypeptide is NADH-quinone oxidoreductase subunit I (Xanthomonas campestris pv. campestris (strain 8004)).